The sequence spans 626 residues: Acetolactate synthase large subunit (626 aa).

Over residues 1–13 the composition is skewed to polar residues; that stretch reads MNVAASQQPTPAT. Residues 1 to 23 form a disordered region; sequence MNVAASQQPTPATVASRGRSAAP. Glu-73 lines the thiamine diphosphate pocket. FAD contacts are provided by residues Arg-175, 281 to 302, and 324 to 343; these read HGTVSAVGALQRSDLLIAIGSR and DIDPAEIGKIKQVEVPIVGD. The thiamine pyrophosphate binding stretch occupies residues 416–496; sequence QHQMWAAQFV…IKIALINNGN (81 aa). Mg(2+) contacts are provided by Asp-467 and Asn-494.

The protein belongs to the TPP enzyme family. As to quaternary structure, dimer of large and small chains. Requires Mg(2+) as cofactor. Thiamine diphosphate serves as cofactor.

It catalyses the reaction 2 pyruvate + H(+) = (2S)-2-acetolactate + CO2. It functions in the pathway amino-acid biosynthesis; L-isoleucine biosynthesis; L-isoleucine from 2-oxobutanoate: step 1/4. Its pathway is amino-acid biosynthesis; L-valine biosynthesis; L-valine from pyruvate: step 1/4. The sequence is that of Acetolactate synthase large subunit (ilvB) from Corynebacterium glutamicum (strain ATCC 13032 / DSM 20300 / JCM 1318 / BCRC 11384 / CCUG 27702 / LMG 3730 / NBRC 12168 / NCIMB 10025 / NRRL B-2784 / 534).